Reading from the N-terminus, the 213-residue chain is MTSVFEERVESLKELGARIEAALPTDVVRVEMAKDELQVIAQRPSIAKVLTFLRDDSACRFSQLVDIAGVDYPSREERFEVVYNMLSMHHNQRIRVKISASEDTPVPSVTRVFSSANWFEREAWDMYGIFFSEHPDLRRLLSDYGFEGHAQRKDFPLTGYKEVRYDEELKRVVYEPVRLSQDFRTFDFLSPWEGMDRQIRRVLPGDEKAEGNA.

Belongs to the complex I 30 kDa subunit family. As to quaternary structure, NDH-1 is composed of 14 different subunits. Subunits NuoB, C, D, E, F, and G constitute the peripheral sector of the complex.

The protein resides in the cell inner membrane. The catalysed reaction is a quinone + NADH + 5 H(+)(in) = a quinol + NAD(+) + 4 H(+)(out). In terms of biological role, NDH-1 shuttles electrons from NADH, via FMN and iron-sulfur (Fe-S) centers, to quinones in the respiratory chain. The immediate electron acceptor for the enzyme in this species is believed to be ubiquinone. Couples the redox reaction to proton translocation (for every two electrons transferred, four hydrogen ions are translocated across the cytoplasmic membrane), and thus conserves the redox energy in a proton gradient. This Rhodospirillum rubrum (strain ATCC 11170 / ATH 1.1.1 / DSM 467 / LMG 4362 / NCIMB 8255 / S1) protein is NADH-quinone oxidoreductase subunit C.